We begin with the raw amino-acid sequence, 500 residues long: Cytochrome P450 CYP736A12 (500 aa).

The helical transmembrane segment at 4–24 (LAYPLLFVLLGALSWWILPII) threads the bilayer. Position 442 (Cys442) interacts with heme.

The protein belongs to the cytochrome P450 family. Heme is required as a cofactor.

The protein resides in the membrane. Probable heme-thiolate monooxygenase. The sequence is that of Cytochrome P450 CYP736A12 from Panax ginseng (Korean ginseng).